The sequence spans 309 residues: Extracellular agarase (309 aa).

A signal peptide (tat-type signal) is located at residues 1 to 30; it reads MVNRRDLIKWSAVALGAGAGLAGPAPAAHA. A GH16 domain is found at 33 to 309; the sequence is LEWEQYPVPA…YRWVRTYQAV (277 aa). Glu-155 (nucleophile) is an active-site residue. The Proton donor role is filled by Glu-160.

It belongs to the glycosyl hydrolase 16 family. Post-translationally, predicted to be exported by the Tat system. The position of the signal peptide cleavage has been experimentally proven.

The protein resides in the secreted. It catalyses the reaction Hydrolysis of (1-&gt;4)-beta-D-galactosidic linkages in agarose, giving the tetramer as the predominant product.. The sequence is that of Extracellular agarase (dagA) from Streptomyces coelicolor (strain ATCC BAA-471 / A3(2) / M145).